Reading from the N-terminus, the 347-residue chain is Protein RecA (347 aa).

68–75 (GPESSGKT) is a binding site for ATP.

It belongs to the RecA family.

Its subcellular location is the cytoplasm. Can catalyze the hydrolysis of ATP in the presence of single-stranded DNA, the ATP-dependent uptake of single-stranded DNA by duplex DNA, and the ATP-dependent hybridization of homologous single-stranded DNAs. It interacts with LexA causing its activation and leading to its autocatalytic cleavage. In Mycobacterium sp. (strain JLS), this protein is Protein RecA.